The sequence spans 293 residues: tRNA pseudouridine synthase B (293 aa).

The active-site Nucleophile is the Asp39.

Belongs to the pseudouridine synthase TruB family. Type 1 subfamily.

It carries out the reaction uridine(55) in tRNA = pseudouridine(55) in tRNA. Functionally, responsible for synthesis of pseudouridine from uracil-55 in the psi GC loop of transfer RNAs. This chain is tRNA pseudouridine synthase B, found in Rickettsia bellii (strain OSU 85-389).